A 150-amino-acid chain; its full sequence is Large ribosomal subunit protein bL9 (150 aa).

Belongs to the bacterial ribosomal protein bL9 family.

Binds to the 23S rRNA. This chain is Large ribosomal subunit protein bL9, found in Shewanella woodyi (strain ATCC 51908 / MS32).